A 226-amino-acid chain; its full sequence is Probable functional amyloid protease FapD (226 aa).

The N-terminal stretch at Met1–Ala18 is a signal peptide. The Peptidase C39 domain occupies Gln50–Val180. Cys56 is an active-site residue.

Belongs to the FapD family.

The protein localises to the periplasm. Probable cysteine protease that is involved in processing fibril precursors. Upon overexpression of the endogenous six-gene locus (fapA-fapF) in situ, cells form large clumps during liquid growth, make large amounts of biofilm and produce amyloid fibrils. Expression of the 6 gene operon in E.coli strain BL21(DE3) induces flocculation and biofilm formation with copious extracellular fibrils. The sequence is that of Probable functional amyloid protease FapD from Pseudomonas fluorescens.